Consider the following 156-residue polypeptide: SsrA-binding protein (156 aa).

The protein belongs to the SmpB family.

Its subcellular location is the cytoplasm. In terms of biological role, required for rescue of stalled ribosomes mediated by trans-translation. Binds to transfer-messenger RNA (tmRNA), required for stable association of tmRNA with ribosomes. tmRNA and SmpB together mimic tRNA shape, replacing the anticodon stem-loop with SmpB. tmRNA is encoded by the ssrA gene; the 2 termini fold to resemble tRNA(Ala) and it encodes a 'tag peptide', a short internal open reading frame. During trans-translation Ala-aminoacylated tmRNA acts like a tRNA, entering the A-site of stalled ribosomes, displacing the stalled mRNA. The ribosome then switches to translate the ORF on the tmRNA; the nascent peptide is terminated with the 'tag peptide' encoded by the tmRNA and targeted for degradation. The ribosome is freed to recommence translation, which seems to be the essential function of trans-translation. The sequence is that of SsrA-binding protein from Clostridium botulinum (strain Loch Maree / Type A3).